The following is a 500-amino-acid chain: ATP synthase subunit alpha (500 aa).

167-174 (GDRQTGKT) lines the ATP pocket.

The protein belongs to the ATPase alpha/beta chains family. In terms of assembly, F-type ATPases have 2 components, CF(1) - the catalytic core - and CF(0) - the membrane proton channel. CF(1) has five subunits: alpha(3), beta(3), gamma(1), delta(1), epsilon(1). CF(0) has three main subunits: a(1), b(2) and c(9-12). The alpha and beta chains form an alternating ring which encloses part of the gamma chain. CF(1) is attached to CF(0) by a central stalk formed by the gamma and epsilon chains, while a peripheral stalk is formed by the delta and b chains.

It localises to the cell inner membrane. It carries out the reaction ATP + H2O + 4 H(+)(in) = ADP + phosphate + 5 H(+)(out). In terms of biological role, produces ATP from ADP in the presence of a proton gradient across the membrane. The alpha chain is a regulatory subunit. This is ATP synthase subunit alpha from Wolinella succinogenes (strain ATCC 29543 / DSM 1740 / CCUG 13145 / JCM 31913 / LMG 7466 / NCTC 11488 / FDC 602W) (Vibrio succinogenes).